A 1008-amino-acid polypeptide reads, in one-letter code: Collagen alpha-1(I) chain (1008 aa).

Residues 1–1008 form a disordered region; the sequence is GGISVPGPMG…PGPPGPPGPP (1008 aa). 11 positions are modified to 4-hydroxyproline: P18, P21, P23, P32, P35, P38, P52, P67, P73, P82, and P88. A compositionally biased stretch (basic and acidic residues) spans 55–69; that stretch reads NGDDGEAGKPGRPGE. K91 bears the 5-hydroxylysine; alternate mark. An O-linked (Gal...) hydroxylysine; alternate glycan is attached at K91. At S97 the chain carries Phosphoserine. Over residues 105 to 121 the composition is skewed to low complexity; the sequence is DAGPAGPKGEPGSPGEN. 15 positions are modified to 4-hydroxyproline: P115, P118, P124, P133, P139, P160, P169, P172, P199, P202, P214, P220, P229, P235, and P238. Low complexity predominate over residues 139-157; the sequence is PGASGPAGARGNDGAAGAA. Positions 159 to 171 are enriched in pro residues; the sequence is PPGPTGPAGPPGF. Low complexity predominate over residues 205-235; sequence AGAAGPAGNPGADGQPGAKGANGAPGIAGAP. The span at 236 to 255 shows a compositional bias: gly residues; it reads GFPGRGPSGPQGPSGPGPKG. K254 is modified (5-hydroxylysine). 8 positions are modified to 4-hydroxyproline: P260, P263, P275, P284, P299, P305, P314, and P320. The span at 309-318 shows a compositional bias: gly residues; the sequence is GERGGPGSRG. K329 carries the 5-hydroxylysine modification. 28 positions are modified to 4-hydroxyproline: P338, P347, P353, P359, P368, P371, P380, P389, P395, P407, P416, P425, P428, P446, P463, P469, P475, P481, P487, P493, P505, P514, P523, P535, P538, P544, P550, and P559. Low complexity predominate over residues 362–388; sequence KGLTGSPGSPGPDGKTGPPGPAGQDGR. Positions 397 to 416 are enriched in low complexity; sequence ARGQAGVMGFPGPKGAAGEP. A compositionally biased stretch (low complexity) spans 475 to 484; the sequence is PGEAGKPGEQ. The span at 519–547 shows a compositional bias: low complexity; that stretch reads PRGAPGNDGAKGDAGAPGAPGSQGAPGLQ. K571 bears the 5-hydroxylysine mark. 3 positions are modified to 4-hydroxyproline: P577, P592, and P598. The segment covering 604-618 has biased composition (low complexity); the sequence is SGPSGPAGPTGARGA. Position 607 is a phosphoserine (S607). 4-hydroxyproline is present on residues P619, P625, P628, P637, P643, P661, P670, and P679. The segment covering 631–658 has biased composition (low complexity); sequence AGFAGPPGADGQPGAKGEPGDAGAKGDA. Pro residues predominate over residues 660-672; it reads PPGPAGPTGPPGP. K682 is modified (5-hydroxylysine). The span at 687–703 shows a compositional bias: low complexity; that stretch reads SAGPPGATGFPGAAGRV. A 4-hydroxyproline mark is found at P691 and P697. 3-hydroxyproline is present on P705. 4-hydroxyproline occurs at positions 706, 717, 738, 747, 755, 764, 781, 790, 793, 799, 814, 820, 826, 835, and 841. Residues 731–740 are compositionally biased toward low complexity; the sequence is ETGPAGRPGE. The segment covering 752–764 has biased composition (low complexity); it reads KGSPGADGPAGAP. The segment covering 813–823 has biased composition (pro residues); it reads PPGPVGPPGLA. The span at 825–840 shows a compositional bias: low complexity; the sequence is PPGESGREGSPGAEGS. 5-hydroxylysine is present on K850. The span at 858-873 shows a compositional bias: pro residues; it reads PGPPGAPGAPGAPGPV. Residues P861, P864, and P867 each carry the 4-hydroxyproline modification. The segment covering 894 to 908 has biased composition (low complexity); sequence AGPAGARGPAGPQGP. A compositionally biased stretch (basic and acidic residues) spans 909–923; it reads RGDKGETGEQGDRGI. At K912 the chain carries 5-hydroxylysine. A 5-hydroxylysine; alternate modification is found at K924. Residue K924 is glycosylated (O-linked (Gal...) hydroxylysine; alternate). Residues P939, P942, P960, and P975 each carry the 4-hydroxyproline modification. The span at 942 to 975 shows a compositional bias: low complexity; the sequence is PGEQGPSGASGPAGPRGPPGSAGSPGKDGLNGLP. A 3-hydroxyproline modification is found at P980. Residue P981 is modified to 4-hydroxyproline. Residues 993–1008 are compositionally biased toward pro residues; the sequence is VGPPGPPGPPGPPGPP. P995 carries the post-translational modification 3-hydroxyproline. 4-hydroxyproline is present on P996. The residue at position 998 (P998) is a 3-hydroxyproline. 4-hydroxyproline is present on P999. P1001 carries the post-translational modification 3-hydroxyproline. A 4-hydroxyproline mark is found at P1002, P1005, and P1008.

Belongs to the fibrillar collagen family. As to quaternary structure, trimers of one alpha 2(I) and two alpha 1(I) chains. Contains mostly 4-hydroxyproline. Proline residues at the third position of the tripeptide repeating unit (G-X-Y) are hydroxylated in some or all of the chains. Post-translationally, contains 3-hydroxyproline at a few sites. This modification occurs on the first proline residue in the sequence motif Gly-Pro-Hyp, where Hyp is 4-hydroxyproline. In terms of processing, lysine residues at the third position of the tripeptide repeating unit (G-X-Y) are 5-hydroxylated in some or all of the chains. O-glycosylated on hydroxylated lysine residues. The O-linked glycan consists of a Glc-Gal disaccharide. Expressed in bones.

It localises to the secreted. The protein localises to the extracellular space. It is found in the extracellular matrix. Its function is as follows. Type I collagen is a member of group I collagen (fibrillar forming collagen). The polypeptide is Collagen alpha-1(I) chain (Paramylodon harlani (Harlan's ground sloth)).